The primary structure comprises 333 residues: Atrochrysone carboxyl ACP thioesterase (333 aa).

Positions 104, 106, 108, and 109 each coordinate Zn(2+). Asp108 functions as the Proton donor/acceptor in the catalytic mechanism.

Belongs to the metallo-beta-lactamase superfamily. Zn(2+) serves as cofactor.

The enzyme catalyses atrochrysone carboxyl-[ACP] + H2O = atrochrysone carboxylate + holo-[ACP] + H(+). The protein operates within pigment biosynthesis. In terms of biological role, atrochrysone carboxyl ACP thioesterase; part of the gene cluster that mediates the biosynthesis of the bianthraquinone cladofulvin, a conidial pigment not required for virulence but that plays a role in fitness and resistance to environmental stresses including UV light and low-temperature stress. The pathway begins with the synthesis of atrochrysone thioester by the polyketide synthase (PKS) claG. The atrochrysone carboxyl ACP thioesterase claF then breaks the thioester bond and releases the atrochrysone carboxylic acid from claG. This compound is decarboxylated by claH to yield emodin, which is further converted to chrysophanol hydroquinone by the reductase claC and the dehydratase claB. The cytochrome P450 monooxygenase claM then catalyzes the dimerization of nataloe-emodin to cladofulvin. This chain is Atrochrysone carboxyl ACP thioesterase, found in Passalora fulva (Tomato leaf mold).